Here is a 470-residue protein sequence, read N- to C-terminus: Cysteine--tRNA ligase (470 aa).

Zn(2+) is bound at residue C28. The short motif at 30 to 40 is the 'HIGH' region element; the sequence is PTVYNYIHIGN. C212, H237, and E241 together coordinate Zn(2+). A 'KMSKS' region motif is present at residues 271–275; sequence KMSKS. Residue K274 participates in ATP binding.

The protein belongs to the class-I aminoacyl-tRNA synthetase family. As to quaternary structure, monomer. Requires Zn(2+) as cofactor.

Its subcellular location is the cytoplasm. The catalysed reaction is tRNA(Cys) + L-cysteine + ATP = L-cysteinyl-tRNA(Cys) + AMP + diphosphate. The chain is Cysteine--tRNA ligase from Ligilactobacillus salivarius (strain UCC118) (Lactobacillus salivarius).